Reading from the N-terminus, the 162-residue chain is Large ribosomal subunit protein uL15 (162 aa).

Over residues 1 to 18 (MKLNEIRDNEGATKDRMR) the composition is skewed to basic and acidic residues. The interval 1 to 42 (MKLNEIRDNEGATKDRMRVGRGIGSGKGKTAGRGVKGQKART) is disordered. A compositionally biased stretch (gly residues) spans 21–35 (RGIGSGKGKTAGRGV).

Belongs to the universal ribosomal protein uL15 family. As to quaternary structure, part of the 50S ribosomal subunit.

In terms of biological role, binds to the 23S rRNA. This is Large ribosomal subunit protein uL15 from Methylobacterium sp. (strain 4-46).